The chain runs to 285 residues: MTALLIDGNALSKTLRAQAAERAAALTARGHQPGLAVILVGANPASEVYVRNKIKACEDNGFFSLKDAYPATLSEADLLARIDELNRDPKIHGILVQLPLPAHIDSHKVIEAIAPEKDVDGFHVANAGALMTGKPLFRPCTPYGVMKMFEAHGIALQGANAVVIGRSNIVGKPMAMMLLDAGATVTICHSKTRDLAAHTREADIVVAAVGKRNILTADMVKPGATVIDVGMNRDDAGKLCGDVDFAGVKEVAGYITPVPGGVGPMTITMLLINTIESAERAAAAA.

NADP(+) contacts are provided by residues 165 to 167 (GRS) and serine 190.

This sequence belongs to the tetrahydrofolate dehydrogenase/cyclohydrolase family. As to quaternary structure, homodimer.

It catalyses the reaction (6R)-5,10-methylene-5,6,7,8-tetrahydrofolate + NADP(+) = (6R)-5,10-methenyltetrahydrofolate + NADPH. The catalysed reaction is (6R)-5,10-methenyltetrahydrofolate + H2O = (6R)-10-formyltetrahydrofolate + H(+). It functions in the pathway one-carbon metabolism; tetrahydrofolate interconversion. Catalyzes the oxidation of 5,10-methylenetetrahydrofolate to 5,10-methenyltetrahydrofolate and then the hydrolysis of 5,10-methenyltetrahydrofolate to 10-formyltetrahydrofolate. The protein is Bifunctional protein FolD of Burkholderia cenocepacia (strain HI2424).